Consider the following 211-residue polypeptide: Large ribosomal subunit protein uL3 (211 aa).

Glutamine 150 bears the N5-methylglutamine mark.

This sequence belongs to the universal ribosomal protein uL3 family. Part of the 50S ribosomal subunit. Forms a cluster with proteins L14 and L19. In terms of processing, methylated by PrmB.

Functionally, one of the primary rRNA binding proteins, it binds directly near the 3'-end of the 23S rRNA, where it nucleates assembly of the 50S subunit. This chain is Large ribosomal subunit protein uL3, found in Pseudomonas fluorescens (strain SBW25).